The following is a 426-amino-acid chain: Antigen EM13 (426 aa).

Positions 1-240 constitute an F-BAR domain; sequence MIQERADIEK…TVAKVDADAD (240 aa). Disordered regions lie at residues 287-315 and 350-369; these read LTSLKTITSPDRGGPIPGTTDSGSNISTS and ISKEKQRVEDTPPYPDFVDD. Over residues 305-315 the composition is skewed to polar residues; the sequence is TTDSGSNISTS. The 56-residue stretch at 371 to 426 folds into the SH3 domain; sequence RPGVPIRALYDYVGVEADELSFNSGDLFEKLEDEDEQGWCKGRKDGRVGLYPRQLR.

In Echinococcus multilocularis (Fox tapeworm), this protein is Antigen EM13 (EM13).